Reading from the N-terminus, the 80-residue chain is Conotoxin Bt6.5 (80 aa).

A signal peptide spans 1–22; sequence MKLTCVLIIAVLFLTACQLATA. A propeptide spanning residues 23-45 is cleaved from the precursor; that stretch reads KTYSTGRQKHRALRSTDKNIKLS. Cystine bridges form between Cys48/Cys62, Cys55/Cys66, and Cys61/Cys73.

The protein belongs to the conotoxin O1 superfamily. In terms of tissue distribution, expressed by the venom duct.

The protein resides in the secreted. In terms of biological role, when injected intracranially in mice, induces a series of symptoms such as quivering, climbing, scratching, barrel rolling and paralysis of limbs. Unexpectedly, no effect is observed on ionic currents when tested on locust DUM neuron. This Conus betulinus (Beech cone) protein is Conotoxin Bt6.5.